Reading from the N-terminus, the 134-residue chain is Bradykinin-related peptides (134 aa).

The N-terminal stretch at 1 to 22 (MAFLKKSLFLVLFLGVVSLSFC) is a signal peptide. 3 propeptides span residues 23 to 44 (EEEK…ESLG), 71 to 82 (RSISGLTPIRLS), and 99 to 121 (ISEA…PLRG). Residues 24–33 (EEKREEHEEE) are compositionally biased toward basic and acidic residues. A disordered region spans residues 24–71 (EEKREEHEEEKRDEEDAESLGKRYGGLSPLRISKRVPPGFTPFRSPAR). 4-hydroxyproline; partial; in form [Hyp3]-bradykinin and [Hyp3]-bradykinin-Val,Asp is present on Pro126.

This sequence belongs to the frog skin active peptide (FSAP) family. Bradykinin-related peptide subfamily. As to expression, expressed by the skin glands. Expression levels in inguinal glands are much higher than in granular glands.

Its subcellular location is the secreted. Its function is as follows. May produce in vitro relaxation of rat arterial smooth muscle and constriction of intestinal smooth muscle. May target bradykinin receptors (BDKRB). This is Bradykinin-related peptides from Physalaemus nattereri (Cuyaba dwarf frog).